Reading from the N-terminus, the 478-residue chain is POU domain, class 2, transcription factor 2 (478 aa).

5 disordered regions span residues 1–82, 167–199, 275–298, 357–391, and 409–478; these read MVHS…PPQA, QAVT…EASD, SSLP…GRRR, PCSA…PLSQ, and TLHP…PYQP. The span at 12–37 shows a compositional bias: basic and acidic residues; that stretch reads RMSKPLEAEKQGLDSPSEHTDTERNG. The span at 38 to 60 shows a compositional bias: polar residues; the sequence is PDTNHQNPQNKTSPFSVSPTGPS. The POU-specific domain maps to 195–269; the sequence is EEASDLEELE…LLEKWLNDAE (75 aa). The span at 275–285 shows a compositional bias: polar residues; the sequence is SSLPSPNQLSR. Residues 297–356 constitute a DNA-binding region (homeobox); the sequence is RRKKRTSIETNVRFALEKSFLANQKPTSEEILLIAEQLHMEKEVIRVWFCNRRQKEKRIN. The segment at 389-410 is leucine-zipper; sequence LSQASSSLSTTVTTLSSAVGTL. Residues 416-425 show a composition bias toward gly residues; sequence AGGGAAGGGA.

Belongs to the POU transcription factor family. Class-2 subfamily. Interacts with NR3C1, AR and PGR. Interacts with POU2AF1; the interaction increases POU2F2 transactivation activity. Predominantly expressed in B-cells.

Its subcellular location is the nucleus. Its activity is regulated as follows. Transactivation activity is enhanced by transcriptional coactivator POU2AF1. In terms of biological role, transcription factor that specifically binds to the octamer motif (5'-ATTTGCAT-3'). Regulates IL6 expression in B cells with POU2AF1. Regulates transcription in a number of tissues in addition to activating immunoglobulin gene expression. Modulates transcription transactivation by NR3C1, AR and PGR. The protein is POU domain, class 2, transcription factor 2 (POU2F2) of Sus scrofa (Pig).